The sequence spans 254 residues: tRNA (guanine-N(1)-)-methyltransferase (254 aa).

S-adenosyl-L-methionine contacts are provided by residues Gly-117 and 136–141 (LGDFVL).

Belongs to the RNA methyltransferase TrmD family. Homodimer.

It localises to the cytoplasm. It carries out the reaction guanosine(37) in tRNA + S-adenosyl-L-methionine = N(1)-methylguanosine(37) in tRNA + S-adenosyl-L-homocysteine + H(+). Functionally, specifically methylates guanosine-37 in various tRNAs. The sequence is that of tRNA (guanine-N(1)-)-methyltransferase from Levilactobacillus brevis (strain ATCC 367 / BCRC 12310 / CIP 105137 / JCM 1170 / LMG 11437 / NCIMB 947 / NCTC 947) (Lactobacillus brevis).